The chain runs to 287 residues: Acetyl-coenzyme A carboxylase carboxyl transferase subunit beta (287 aa).

The region spanning 25–287 is the CoA carboxyltransferase N-terminal domain; the sequence is IWTKCSGCVQ…KLTQQSFSEK (263 aa). The Zn(2+) site is built by Cys29, Cys32, Cys48, and Cys51. The C4-type zinc-finger motif lies at 29–51; the sequence is CSGCVQLLYTKELERNLQVCPKC.

The protein belongs to the AccD/PCCB family. Acetyl-CoA carboxylase is a heterohexamer composed of biotin carboxyl carrier protein (AccB), biotin carboxylase (AccC) and two subunits each of ACCase subunit alpha (AccA) and ACCase subunit beta (AccD). The cofactor is Zn(2+).

Its subcellular location is the cytoplasm. The enzyme catalyses N(6)-carboxybiotinyl-L-lysyl-[protein] + acetyl-CoA = N(6)-biotinyl-L-lysyl-[protein] + malonyl-CoA. Its pathway is lipid metabolism; malonyl-CoA biosynthesis; malonyl-CoA from acetyl-CoA: step 1/1. Its function is as follows. Component of the acetyl coenzyme A carboxylase (ACC) complex. Biotin carboxylase (BC) catalyzes the carboxylation of biotin on its carrier protein (BCCP) and then the CO(2) group is transferred by the transcarboxylase to acetyl-CoA to form malonyl-CoA. The polypeptide is Acetyl-coenzyme A carboxylase carboxyl transferase subunit beta (Blochmanniella floridana).